Reading from the N-terminus, the 285-residue chain is Probable endonuclease 4 (285 aa).

Residues His-69, His-109, Glu-145, Asp-179, His-182, His-216, Asp-229, His-231, and Glu-261 each coordinate Zn(2+).

This sequence belongs to the AP endonuclease 2 family. Requires Zn(2+) as cofactor.

It catalyses the reaction Endonucleolytic cleavage to 5'-phosphooligonucleotide end-products.. Endonuclease IV plays a role in DNA repair. It cleaves phosphodiester bonds at apurinic or apyrimidinic (AP) sites, generating a 3'-hydroxyl group and a 5'-terminal sugar phosphate. In Salmonella newport (strain SL254), this protein is Probable endonuclease 4.